We begin with the raw amino-acid sequence, 168 residues long: NADH dehydrogenase [ubiquinone] 1 alpha subcomplex assembly factor 2 (168 aa).

The segment at 112 to 168 is disordered; sequence GKETSEELLPSPTATQVKGHASAPYFGREEPSVAPTSTGKTFQPGSWTPEDGKRQSQ. S133 carries the post-translational modification Phosphoserine. Polar residues predominate over residues 145–157; sequence APTSTGKTFQPGS.

Belongs to the complex I NDUFA12 subunit family. In terms of assembly, interacts with ARMC9.

It is found in the mitochondrion. Acts as a molecular chaperone for mitochondrial complex I assembly. Complex I functions in the transfer of electrons from NADH to the respiratory chain. The immediate electron acceptor for the enzyme is believed to be ubiquinone. Is involved in the initial steps of cilia formation, including removal of CP110 from the mother centrioles, docking of membrane vesicles to the mother centrioles, and establishment of the transition zone. The sequence is that of NADH dehydrogenase [ubiquinone] 1 alpha subcomplex assembly factor 2 (Ndufaf2) from Mus musculus (Mouse).